Reading from the N-terminus, the 339-residue chain is D-erythrose-4-phosphate dehydrogenase (339 aa).

NAD(+)-binding positions include 12–13 (RI) and R81. Substrate contacts are provided by residues 154-156 (SCT), R200, 213-214 (TK), and R236. The active-site Nucleophile is the C155. An NAD(+)-binding site is contributed by N318.

This sequence belongs to the glyceraldehyde-3-phosphate dehydrogenase family. Epd subfamily. In terms of assembly, homotetramer.

It localises to the cytoplasm. The enzyme catalyses D-erythrose 4-phosphate + NAD(+) + H2O = 4-phospho-D-erythronate + NADH + 2 H(+). It participates in cofactor biosynthesis; pyridoxine 5'-phosphate biosynthesis; pyridoxine 5'-phosphate from D-erythrose 4-phosphate: step 1/5. Catalyzes the NAD-dependent conversion of D-erythrose 4-phosphate to 4-phosphoerythronate. The sequence is that of D-erythrose-4-phosphate dehydrogenase from Escherichia coli (strain UTI89 / UPEC).